Consider the following 1161-residue polypeptide: Lethal(2) giant larvae protein (1161 aa).

Positions 15-86 are phospho-regulated basic and hydrophobic (PRBH) motif; the sequence is DRHRLQKDLF…NNSASELNVQ (72 aa). WD repeat units lie at residues 39–72, 82–128, 131–167, 189–223, 231–263, 278–320, 328–358, and 380–464; these read SALA…LYGQ, ELNV…DGKL, VSSL…EPVI, SIRQ…QRAY, SVGL…PEPP, SINR…GHKV, VIDF…AYDL, and TCNY…YNFK. Residues Ser-473 and Ser-484 each carry the phosphoserine modification. WD repeat units lie at residues 513–594 and 603–664; these read KKIA…SGVL and TCMA…LRES. A Phosphoserine modification is found at Ser-679. WD repeat units lie at residues 708-778, 787-832, 837-927, and 941-964; these read VRCL…KEIQ, GISI…LKPI, LTAN…LNAA, and CFTN…ALAT. Ser-808, Ser-869, Ser-876, Ser-887, Ser-889, and Ser-893 each carry phosphoserine. At Ser-1013 the chain carries Phosphoserine. The tract at residues 1141–1161 is disordered; that stretch reads EKTNGDNKIGTPKTAPEESQF.

The protein belongs to the WD repeat L(2)GL family. May form multimeric complexes. Interacts with mahj. Interacts with aPKC; leading to phosphorylation. Interacts with ball. Phosphorylated by aPKC which lowers lipid affinity and promotes dissociation from the cell cortex. In developing oocytes, aPKC-mediated phosphorylation restricts activity to the oocyte posterior and is required for oocyte polarity formation. In terms of tissue distribution, expressed in the epithelial cells of the digestive tract and in gonads.

It is found in the cytoplasm. Its subcellular location is the cell cortex. Its function is as follows. Essential for the development of polarized epithelia, for cell polarity associated with asymmetric cell division of neuroblasts during development, and for oocyte polarity formation. Promotes the formation of actin-rich projections at the oocyte cortex and the posterior enrichment of par-1 which is required for oocyte polarization. Regulates the localization of axis-specifying morphogens such as stau and grk. Has an essential role in control of cell proliferation and differentiation during development and could act as a tumor suppressor. Functionally, has an accessory function in control of cell proliferation and differentiation during development. This is Lethal(2) giant larvae protein (l(2)gl) from Drosophila melanogaster (Fruit fly).